A 1223-amino-acid polypeptide reads, in one-letter code: RNA-binding protein 20 (1223 aa).

Disordered regions lie at residues Met-1–Leu-59, Gln-238–Gln-288, and Gly-306–Arg-381. Residues Ala-29–Ala-57 show a composition bias toward pro residues. Composition is skewed to polar residues over residues Gln-238–Val-261 and Gly-314–Pro-331. Residues His-410–Phe-444 form a U1-type zinc finger. Residues Arg-520–Arg-595 enclose the RRM domain. The segment covering Glu-626–Arg-636 has biased composition (basic and acidic residues). 3 disordered regions span residues Glu-626–Glu-902, Glu-971–Met-995, and Met-1042–Glu-1102. The segment at Tyr-630–Cys-657 is RS. Phosphoserine occurs at positions 637, 639, 642, 644, 662, and 681. The span at Arg-638–Ser-662 shows a compositional bias: low complexity. Composition is skewed to basic and acidic residues over residues Asp-676–His-711 and Arg-718–Glu-737. Residues Ser-742–Ser-752 are compositionally biased toward low complexity. Ser-744 is modified (phosphoserine). 2 stretches are compositionally biased toward basic and acidic residues: residues Lys-755–Leu-774 and Arg-786–Gln-852. A phosphoserine mark is found at Ser-803, Ser-861, Ser-872, Ser-887, Ser-889, Ser-973, Ser-976, and Ser-1044. Residues Arg-864–Asp-884 are compositionally biased toward basic and acidic residues. Over residues Ser-1083–Glu-1102 the composition is skewed to polar residues. A phosphoserine mark is found at Ser-1111 and Ser-1116. A Matrin-type zinc finger spans residues Phe-1157 to Lys-1188. Residues Gly-1197 to Leu-1223 are disordered. The residue at position 1206 (Ser-1206) is a Phosphoserine.

Associates with components of the U1 and U2 U1 small nuclear ribonucleoprotein complexes. In terms of processing, phosphorylation regulates the subcellular localization. Phosphorylation of Ser-637 and Ser-639 in the RS (arginine/serine-rich) region promotes nuclear localization of the protein. In contrast, phosphorylation of the C-terminal disordered region promotes localization to cytoplasmic ribonucleoprotein granules.

It is found in the nucleus. The protein resides in the cytoplasm. It localises to the cytoplasmic ribonucleoprotein granule. RNA-binding protein that acts as a regulator of mRNA splicing of a subset of genes encoding key structural proteins involved in cardiac development, such as TTN (Titin), CACNA1C, CAMK2D or PDLIM5/ENH. Acts as a repressor of mRNA splicing: specifically binds the 5'UCUU-3' motif that is predominantly found within intronic sequences of pre-mRNAs, leading to the exclusion of specific exons in target transcripts. RBM20-mediated exon skipping is hormone-dependent and is essential for TTN isoform transition in both cardiac and skeletal muscles. RBM20-mediated exon skipping of TTN provides substrates for the formation of circular RNA (circRNAs) from the TTN transcripts. Together with RBM24, promotes the expression of short isoforms of PDLIM5/ENH in cardiomyocytes. In Sus scrofa (Pig), this protein is RNA-binding protein 20.